Reading from the N-terminus, the 256-residue chain is MQRTKEAVKASDGNLLGDPGRIPLSKRESIKWQRPRFTRQALMRCCLIKWILSSAAPQGSDSSDSELELSTVRHQPEGLDQLQAQTKFTKKELQSLYRGFKNECPTGLVDEDTFKLIYSQFFPQGDATTYAHFLFNAFDADGNGAIHFEDFVVGLSILLRGTVHEKLKWAFNLYDINKDGCITKEEMLAIMKSIYDMMGRHTYPILREDAPLEHVERFFQKMDRNQDGVVTIDEFLETCQKDENIMNSMQLFENVI.

The segment at 1–22 is disordered; the sequence is MQRTKEAVKASDGNLLGDPGRI. K26 participates in a covalent cross-link: Glycyl lysine isopeptide (Lys-Gly) (interchain with G-Cter in SUMO1). Residues C45 and C46 are each lipidated (S-palmitoyl cysteine). S60 and S63 each carry phosphoserine. Residues 67–123 enclose the EF-hand 1; degenerate domain; it reads LELSTVRHQPEGLDQLQAQTKFTKKELQSLYRGFKNECPTGLVDEDTFKLIYSQFFP. K90 participates in a covalent cross-link: Glycyl lysine isopeptide (Lys-Gly) (interchain with G-Cter in SUMO1). EF-hand domains lie at 126–161, 162–197, and 210–245; these read DATT…LLRG, TVHE…IYDM, and APLE…DENI. Positions 175, 177, 179, 181, 186, 223, 225, 227, and 234 each coordinate Ca(2+). The interval 243–256 is interaction with KCND2; that stretch reads ENIMNSMQLFENVI.

The protein belongs to the recoverin family. As to quaternary structure, binds to DNA as a homomultimer. Dimerization is induced by binding to calcium. Interacts with the C-terminus of PSEN1 and PSEN2 and with PSEN2 CTF subunit. Associates with KCN1. Component of heteromultimeric potassium channels. Identified in potassium channel complexes containing KCND1, KCND2, KCND3, KCNIP1, KCNIP2, KCNIP3, KCNIP4, DPP6 and DPP10. Interacts with KCND2 and KCND3. Post-translationally, palmitoylated. Palmitoylation enhances association with the plasma membrane. In terms of processing, proteolytically cleaved by caspase-3. Highly expressed in brain. Isoform 1 or isoform 4 (T+ forms) are expressed at equal levels with isoform 2 or isoform 3 (T- forms). Primarily detected in the layer V and deep layer VI of the cerebral cortex, the hippocampus, and the entire cerebellum. Expressed at low levels in testis. Also expressed in heart.

The protein localises to the cytoplasm. Its subcellular location is the cell membrane. The protein resides in the endoplasmic reticulum. It is found in the golgi apparatus. It localises to the nucleus. Functionally, calcium-dependent transcriptional repressor that binds to the DRE element of genes including PDYN and FOS. Affinity for DNA is reduced upon binding to calcium and enhanced by binding to magnesium. Seems to be involved in nociception. Its function is as follows. Regulatory subunit of Kv4/D (Shal)-type voltage-gated rapidly inactivating A-type potassium channels, such as KCND2/Kv4.2 and KCND3/Kv4.3. Modulates channel expression at the cell membrane, gating characteristics, inactivation kinetics and rate of recovery from inactivation in a calcium-dependent and isoform-specific manner. May play a role in the regulation of PSEN2 proteolytic processing and apoptosis. Together with PSEN2 involved in modulation of amyloid-beta formation. The polypeptide is Calsenilin (Kcnip3) (Mus musculus (Mouse)).